A 226-amino-acid polypeptide reads, in one-letter code: Urease accessory protein UreF (226 aa).

It belongs to the UreF family. As to quaternary structure, ureD, UreF and UreG form a complex that acts as a GTP-hydrolysis-dependent molecular chaperone, activating the urease apoprotein by helping to assemble the nickel containing metallocenter of UreC. The UreE protein probably delivers the nickel.

The protein localises to the cytoplasm. In terms of biological role, required for maturation of urease via the functional incorporation of the urease nickel metallocenter. The polypeptide is Urease accessory protein UreF (Burkholderia cenocepacia (strain ATCC BAA-245 / DSM 16553 / LMG 16656 / NCTC 13227 / J2315 / CF5610) (Burkholderia cepacia (strain J2315))).